Consider the following 428-residue polypeptide: GTPase Obg (428 aa).

An Obg domain is found at 1–158; sequence MFVDQVKIYV…RDVILELKVL (158 aa). The region spanning 159 to 329 is the OBG-type G domain; it reads ADVGLVGFPS…LLFEVANLIE (171 aa). GTP is bound by residues 165-172, 190-194, 212-215, 282-285, and 310-312; these read GFPSVGKS, FTTIV, DLPG, NKMD, and SAV. The Mg(2+) site is built by serine 172 and threonine 192. Residues 350 to 428 enclose the OCT domain; the sequence is KFETEGVKFD…ILEYEFEFID (79 aa).

The protein belongs to the TRAFAC class OBG-HflX-like GTPase superfamily. OBG GTPase family. As to quaternary structure, monomer. The cofactor is Mg(2+).

The protein resides in the cytoplasm. An essential GTPase which binds GTP, GDP and possibly (p)ppGpp with moderate affinity, with high nucleotide exchange rates and a fairly low GTP hydrolysis rate. Plays a role in control of the cell cycle, stress response, ribosome biogenesis and in those bacteria that undergo differentiation, in morphogenesis control. The sequence is that of GTPase Obg from Bacillus cereus (strain AH820).